The sequence spans 467 residues: Putative gluconeogenesis factor (467 aa).

A compositionally biased stretch (pro residues) spans 1–12 (MSAPPAPPPDRS). Residues 1 to 27 (MSAPPAPPPDRSAPPDRTDSAQTEPTR) are disordered.

Belongs to the gluconeogenesis factor family.

It is found in the cytoplasm. Its function is as follows. Required for morphogenesis under gluconeogenic growth conditions. This Deinococcus radiodurans (strain ATCC 13939 / DSM 20539 / JCM 16871 / CCUG 27074 / LMG 4051 / NBRC 15346 / NCIMB 9279 / VKM B-1422 / R1) protein is Putative gluconeogenesis factor.